The chain runs to 360 residues: Isopentenyl-diphosphate delta-isomerase (360 aa).

12–13 provides a ligand contact to substrate; sequence RK. FMN-binding positions include serine 70, 71–73, serine 101, and asparagine 130; that span reads SMT. Substrate is bound at residue 101–103; that stretch reads SMR. Substrate is bound at residue glutamine 165. Residue glutamate 166 coordinates Mg(2+). FMN contacts are provided by residues lysine 197, 288 to 290, and 309 to 310; these read GIR and AG.

This sequence belongs to the IPP isomerase type 2 family. Homooctamer. Dimer of tetramers. Requires FMN as cofactor. It depends on NADPH as a cofactor. Mg(2+) is required as a cofactor.

The protein localises to the cytoplasm. The enzyme catalyses isopentenyl diphosphate = dimethylallyl diphosphate. In terms of biological role, involved in the biosynthesis of isoprenoids. Catalyzes the 1,3-allylic rearrangement of the homoallylic substrate isopentenyl (IPP) to its allylic isomer, dimethylallyl diphosphate (DMAPP). This chain is Isopentenyl-diphosphate delta-isomerase, found in Chlorobium limicola (strain DSM 245 / NBRC 103803 / 6330).